The following is a 158-amino-acid chain: S-ribosylhomocysteine lyase (158 aa).

Fe cation contacts are provided by His55, His59, and Cys127.

This sequence belongs to the LuxS family. In terms of assembly, homodimer. Fe cation serves as cofactor.

The catalysed reaction is S-(5-deoxy-D-ribos-5-yl)-L-homocysteine = (S)-4,5-dihydroxypentane-2,3-dione + L-homocysteine. Its function is as follows. Involved in the synthesis of autoinducer 2 (AI-2) which is secreted by bacteria and is used to communicate both the cell density and the metabolic potential of the environment. The regulation of gene expression in response to changes in cell density is called quorum sensing. Catalyzes the transformation of S-ribosylhomocysteine (RHC) to homocysteine (HC) and 4,5-dihydroxy-2,3-pentadione (DPD). This Geobacillus thermodenitrificans (strain NG80-2) protein is S-ribosylhomocysteine lyase.